The chain runs to 93 residues: UPF0728 protein C10orf53 homolog (93 aa).

This sequence belongs to the UPF0728 family.

The polypeptide is UPF0728 protein C10orf53 homolog (Xenopus tropicalis (Western clawed frog)).